The following is a 76-amino-acid chain: Small ribosomal subunit protein bS18 (76 aa).

The protein belongs to the bacterial ribosomal protein bS18 family. In terms of assembly, part of the 30S ribosomal subunit. Forms a tight heterodimer with protein bS6.

In terms of biological role, binds as a heterodimer with protein bS6 to the central domain of the 16S rRNA, where it helps stabilize the platform of the 30S subunit. The sequence is that of Small ribosomal subunit protein bS18 from Nitrosomonas eutropha (strain DSM 101675 / C91 / Nm57).